Reading from the N-terminus, the 199-residue chain is Small ribosomal subunit protein uS4c (199 aa).

A compositionally biased stretch (basic and acidic residues) spans 1–24 (MESDQSKVESDQSKMESDQSKVES). Residues 1–35 (MESDQSKVESDQSKMESDQSKVESDQSISQSTSKK) are disordered. An S4 RNA-binding domain is found at 84 to 146 (MRLDNIIFRL…QKSQELIKRN (63 aa)).

This sequence belongs to the universal ribosomal protein uS4 family. In terms of assembly, part of the 30S ribosomal subunit. Contacts protein S5. The interaction surface between S4 and S5 is involved in control of translational fidelity.

The protein localises to the plastid. It is found in the chloroplast. One of the primary rRNA binding proteins, it binds directly to 16S rRNA where it nucleates assembly of the body of the 30S subunit. Its function is as follows. With S5 and S12 plays an important role in translational accuracy. The chain is Small ribosomal subunit protein uS4c (rps4) from Psilotum nudum (Whisk fern).